The primary structure comprises 139 residues: UDP-glucose 4-epimerase (139 aa).

Residues 11–12 (YI), 31–36 (DNLCNS), 58–59 (DI), 80–84 (FAGLK), asparagine 99, and serine 124 each bind NAD(+). Serine 124 serves as a coordination point for substrate. Catalysis depends on tyrosine 136, which acts as the Proton acceptor.

The protein belongs to the NAD(P)-dependent epimerase/dehydratase family. Homodimer. It depends on NAD(+) as a cofactor.

The catalysed reaction is UDP-alpha-D-glucose = UDP-alpha-D-galactose. It functions in the pathway carbohydrate metabolism; galactose metabolism. Its function is as follows. Involved in the metabolism of galactose. Catalyzes the conversion of UDP-galactose (UDP-Gal) to UDP-glucose (UDP-Glc) through a mechanism involving the transient reduction of NAD. The polypeptide is UDP-glucose 4-epimerase (galE) (Klebsiella pneumoniae).